A 742-amino-acid polypeptide reads, in one-letter code: Zinc finger protein 700 (742 aa).

The interval 1 to 20 (MPCCSHRSCREDPGTSESRE) is disordered. Residues 8 to 20 (SCREDPGTSESRE) show a composition bias toward basic and acidic residues. The KRAB domain occupies 24–104 (VAFEDVAVNF…KEDSHCGETF (81 aa)). 9 C2H2-type zinc fingers span residues 194–216 (YACKVCGKTFIFHSSIRRHMVMH), 222–244 (YKCKFCGKAFHSFSLYLIHERTH), 250–272 (YECKQCGKSFTYSATLQIHERTH), 278–300 (YECSKCDKAFHSSSSYHRHERSH), 306–328 (YQCKECGKAFAYTSSLRRHERTH), 362–384 (YKCKICGKGFYSAKSFQTHEKTH), 390–412 (YKCKQCGKAFNLSSSFRYHERIH), 418–440 (YECKQCGKAFRSASQLRVHGGTH), and 446–468 (YECKECGKAFRSTSHLRVHGRTH). A C2H2-type 10; degenerate zinc finger spans residues 474 to 502 (YECKECGKAFRYVKHLQIHERTEKHIRMP). 8 consecutive C2H2-type zinc fingers follow at residues 508–530 (YKCSICEKGFYSAKSFQTHEKTH), 536–558 (YECNQCGKAFRCCNSLRYHERTH), 564–586 (YECKQCGKAFRSASHLRMHERTH), 592–614 (YECKQCGKAFSCASNLRKHGRTH), 620–642 (YECKQCGKAFRSASNLQMHERTH), 648–670 (YECKECEKAFCKFSSFQIHERKH), 676–698 (YECKHCGNGFTSAKILQIHARTH), and 704–726 (YECKECGKAFNYFSSLHIHARTH).

The protein belongs to the krueppel C2H2-type zinc-finger protein family.

It is found in the nucleus. Functionally, may be involved in transcriptional regulation. The chain is Zinc finger protein 700 (ZNF700) from Homo sapiens (Human).